Consider the following 260-residue polypeptide: Thiazole synthase (260 aa).

The Schiff-base intermediate with DXP role is filled by Lys96. 1-deoxy-D-xylulose 5-phosphate-binding positions include Gly157, 184–185 (AG), and 206–207 (NT).

This sequence belongs to the ThiG family. Homotetramer. Forms heterodimers with either ThiH or ThiS.

The protein resides in the cytoplasm. The enzyme catalyses [ThiS sulfur-carrier protein]-C-terminal-Gly-aminoethanethioate + 2-iminoacetate + 1-deoxy-D-xylulose 5-phosphate = [ThiS sulfur-carrier protein]-C-terminal Gly-Gly + 2-[(2R,5Z)-2-carboxy-4-methylthiazol-5(2H)-ylidene]ethyl phosphate + 2 H2O + H(+). It functions in the pathway cofactor biosynthesis; thiamine diphosphate biosynthesis. In terms of biological role, catalyzes the rearrangement of 1-deoxy-D-xylulose 5-phosphate (DXP) to produce the thiazole phosphate moiety of thiamine. Sulfur is provided by the thiocarboxylate moiety of the carrier protein ThiS. In vitro, sulfur can be provided by H(2)S. In Nitrobacter winogradskyi (strain ATCC 25391 / DSM 10237 / CIP 104748 / NCIMB 11846 / Nb-255), this protein is Thiazole synthase.